We begin with the raw amino-acid sequence, 426 residues long: Glutamate-1-semialdehyde 2,1-aminomutase (426 aa).

Lys265 is subject to N6-(pyridoxal phosphate)lysine.

The protein belongs to the class-III pyridoxal-phosphate-dependent aminotransferase family. HemL subfamily. As to quaternary structure, homodimer. Pyridoxal 5'-phosphate serves as cofactor.

The protein localises to the cytoplasm. It catalyses the reaction (S)-4-amino-5-oxopentanoate = 5-aminolevulinate. Its pathway is porphyrin-containing compound metabolism; protoporphyrin-IX biosynthesis; 5-aminolevulinate from L-glutamyl-tRNA(Glu): step 2/2. This chain is Glutamate-1-semialdehyde 2,1-aminomutase, found in Neisseria gonorrhoeae (strain ATCC 700825 / FA 1090).